We begin with the raw amino-acid sequence, 540 residues long: Coiled-coil domain-containing protein 116 (540 aa).

A coiled-coil region spans residues 79 to 102 (QVLDSLQTVVEQATECVATMKTEA). Positions 347 to 400 (PGNSDLQPSSKASLPTDREARGETCYSPTSASSPKTSHRKSKDRRGSPSNAVQM) are disordered. 2 stretches are compositionally biased toward polar residues: residues 350 to 359 (SDLQPSSKAS) and 372 to 381 (YSPTSASSPK). At Ser-393 the chain carries Phosphoserine.

Its subcellular location is the cytoplasm. It is found in the cytoskeleton. It localises to the microtubule organizing center. The protein resides in the centrosome. This is Coiled-coil domain-containing protein 116 (Ccdc116) from Rattus norvegicus (Rat).